We begin with the raw amino-acid sequence, 168 residues long: UPF0262 protein BRADO6636 (168 aa).

The protein belongs to the UPF0262 family.

This chain is UPF0262 protein BRADO6636, found in Bradyrhizobium sp. (strain ORS 278).